The following is a 252-amino-acid chain: Receptor expression-enhancing protein 2 (252 aa).

2 helical membrane passes run 1–21 (MVSW…YPAY) and 35–55 (YVKW…ETLT). Serine 150 carries the phosphoserine modification. The interval 165–252 (LQRPDGRLRP…KKTSGGGDSA (88 aa)) is disordered. A compositionally biased stretch (basic and acidic residues) spans 203–217 (SRTEASEDDMGDKAP).

It belongs to the DP1 family. Interacts with odorant receptor proteins. In terms of tissue distribution, detected in brain, heart and skeletal muscle, and at low levels in placenta, kidney and pancreas. Expressed in circumvallate papillae.

Its subcellular location is the membrane. Functionally, required for endoplasmic reticulum (ER) network formation, shaping and remodeling. May enhance the cell surface expression of odorant receptors. The chain is Receptor expression-enhancing protein 2 (REEP2) from Homo sapiens (Human).